Reading from the N-terminus, the 304-residue chain is uncharacterized protein (304 aa).

Residues 1–25 (MVKTAMLGAVALVIALGGTCGVADA) form the signal peptide. The GP-PDE domain occupies 34-303 (PMIVAHRAGT…DSPLAAQQWR (270 aa)).

This is an uncharacterized protein from Mycobacterium tuberculosis (strain CDC 1551 / Oshkosh).